Reading from the N-terminus, the 364-residue chain is MEEIGHHFGLGATAHGQHHSQLPWGSSPLSAVISPPPQQQQQHQQQSAGYLAHSPLSLNTAPPGVSHGGGSGCSNPVLQLANGSLLEACAKAAKEPSSSSYAADVEAIKAKIISHPHYSSLLAAYLDCQKVGAPPEVSARLTAVAQDLELRQRTALGGLGTATEPELDQFMEAYHEMLVKYREELTRPLQEAMEFLRRVETQLNSLSISGRSLRNILSTGSSEEDQEGSGGETELPEIDAHGVDQELKHHLLKKYSGYLSSLKQELSKKKKKGKLPKEARQQLLSWWEMHYKWPYPSESQKVALAESTGLDLKQINNWFINQRKRHWKPTDEMQFVMMDAYHPPNAAFYMDGHFVNDSGLYRFG.

Residues 13-49 are disordered; that stretch reads TAHGQHHSQLPWGSSPLSAVISPPPQQQQQHQQQSAG. Over residues 19-29 the composition is skewed to polar residues; it reads HSQLPWGSSPL. Residues 246–266 enclose the ELK domain; it reads ELKHHLLKKYSGYLSSLKQEL. The homeobox; TALE-type DNA-binding region spans 267–330; that stretch reads SKKKKKGKLP…NQRKRHWKPT (64 aa).

It belongs to the TALE/KNOX homeobox family. In terms of assembly, binds DNA as a monomer. The unit of inflorescence is the spikelet, which bears a fertile tract, the lemma, and the floret consisting of palea, two lodicules, three stamens and the pistil. The lemma is completed by the awn, an appendage homologous to the laminae of normal leaves. Expressed in the inflorescences and lemmas and at lower levels, in palea and vascular bundles.

The protein localises to the nucleus. May play a role in meristem formation and/or maintenance. Overexpression causes the hooded phenotype characterized by the appearance of an extra flower of inverse polarity on the lemma. Binds to the DNA sequence 5'-TGAC-3'. This Hordeum vulgare (Barley) protein is Homeobox protein KNOX3 (KNOX3).